A 624-amino-acid chain; its full sequence is Phosphomethylpyrimidine synthase (624 aa).

The interval 40–61 (VPMRKISQSDTPTNTGREKNPP) is disordered. Residues 45 to 54 (ISQSDTPTNT) are compositionally biased toward polar residues. Residues asparagine 229, methionine 258, tyrosine 287, histidine 323, 343–345 (SRG), 384–387 (DGLR), and glutamate 423 contribute to the substrate site. Histidine 427 serves as a coordination point for Zn(2+). Tyrosine 450 serves as a coordination point for substrate. Histidine 491 is a Zn(2+) binding site. Residues cysteine 571, cysteine 574, and cysteine 579 each coordinate [4Fe-4S] cluster.

It belongs to the ThiC family. Homodimer. Requires [4Fe-4S] cluster as cofactor.

The enzyme catalyses 5-amino-1-(5-phospho-beta-D-ribosyl)imidazole + S-adenosyl-L-methionine = 4-amino-2-methyl-5-(phosphooxymethyl)pyrimidine + CO + 5'-deoxyadenosine + formate + L-methionine + 3 H(+). Its pathway is cofactor biosynthesis; thiamine diphosphate biosynthesis. Functionally, catalyzes the synthesis of the hydroxymethylpyrimidine phosphate (HMP-P) moiety of thiamine from aminoimidazole ribotide (AIR) in a radical S-adenosyl-L-methionine (SAM)-dependent reaction. This Methylococcus capsulatus (strain ATCC 33009 / NCIMB 11132 / Bath) protein is Phosphomethylpyrimidine synthase.